Here is a 352-residue protein sequence, read N- to C-terminus: uncharacterized protein (352 aa).

3 N-linked (GlcNAc...) asparagine glycosylation sites follow: N14, N52, and N70. The disordered stretch occupies residues 41–73 (LSDYKKNKDTLNNSNNNINQPFENSNNFNNNSK). The segment covering 50 to 72 (TLNNSNNNINQPFENSNNFNNNS) has biased composition (low complexity). The helical transmembrane segment at 131 to 151 (IIFKSSGLLITLLVLYLGTFF) threads the bilayer. 6 N-linked (GlcNAc...) asparagine glycosylation sites follow: N165, N186, N192, N193, N203, and N289. Low complexity predominate over residues 193–213 (NSSNSNNNNINNSNNNNNNNN). The tract at residues 193–219 (NSSNSNNNNINNSNNNNNNNNRILSPN) is disordered.

It localises to the membrane. This is an uncharacterized protein from Dictyostelium discoideum (Social amoeba).